Reading from the N-terminus, the 171-residue chain is Tetratricopeptide repeat protein 9C (171 aa).

TPR repeat units lie at residues 8 to 41 (AQLY…LRGL), 72 to 107 (TDCY…QPEN), and 108 to 141 (AKAL…QPKD).

It belongs to the TTC9 family.

The protein is Tetratricopeptide repeat protein 9C (Ttc9c) of Rattus norvegicus (Rat).